Here is a 418-residue protein sequence, read N- to C-terminus: Glutamyl-tRNA reductase (418 aa).

Residues 49-52 (TCNR), serine 106, 111-113 (EPQ), and glutamine 117 contribute to the substrate site. Cysteine 50 functions as the Nucleophile in the catalytic mechanism. 186–191 (GAGEMI) contributes to the NADP(+) binding site.

The protein belongs to the glutamyl-tRNA reductase family. As to quaternary structure, homodimer.

It carries out the reaction (S)-4-amino-5-oxopentanoate + tRNA(Glu) + NADP(+) = L-glutamyl-tRNA(Glu) + NADPH + H(+). The protein operates within porphyrin-containing compound metabolism; protoporphyrin-IX biosynthesis; 5-aminolevulinate from L-glutamyl-tRNA(Glu): step 1/2. Its function is as follows. Catalyzes the NADPH-dependent reduction of glutamyl-tRNA(Glu) to glutamate 1-semialdehyde (GSA). The sequence is that of Glutamyl-tRNA reductase from Alcanivorax borkumensis (strain ATCC 700651 / DSM 11573 / NCIMB 13689 / SK2).